Reading from the N-terminus, the 40-residue chain is Ferredoxin-2 (40 aa).

The region spanning 3-40 (YNIKLITPEGTKEITCSDSEYILDAAEEKGLDLPYSCR) is the 2Fe-2S ferredoxin-type domain. Position 39 (Cys39) interacts with [2Fe-2S] cluster.

The protein belongs to the 2Fe2S plant-type ferredoxin family. [2Fe-2S] cluster serves as cofactor.

The protein localises to the plastid. The protein resides in the chloroplast. Functionally, ferredoxins are iron-sulfur proteins that transfer electrons in a wide variety of metabolic reactions. The chain is Ferredoxin-2 from Pisum sativum (Garden pea).